The chain runs to 84 residues: Cytoplasmic envelopment protein 3 (84 aa).

Gly2 is lipidated: N-myristoyl glycine; by host. The asp/Glu-rich (acidic) stretch occupies residues 40–46 (DLDDLRC).

This sequence belongs to the herpesviridae cytoplasmic envelopment protein 3 family. Interacts with cytoplasmic envelopment protein 2; this interaction is essential for the proper localization of each protein to the assembly complex and thus for the production of infectious virus. Myristoylation and palmitoylation (probably on one or more of the nearby cysteines at the N-terminus) enable membrane-binding and Golgi apparatus-specific targeting and are essential for efficient packaging. Post-translationally, phosphorylated. Phosphorylation does not seem to be required for recycling to the host Golgi apparatus. Packaging is selective for underphosphorylated forms.

It localises to the virion tegument. It is found in the virion membrane. The protein resides in the host cell membrane. Its subcellular location is the host Golgi apparatus membrane. Functionally, plays an important role in the cytoplasmic envelopment of tegument proteins and capsids during the assembly and egress processes. Also participates in viral entry at the fusion step probably by regulating the core fusion machinery. The polypeptide is Cytoplasmic envelopment protein 3 (MDV023) (Gallus gallus (Chicken)).